The following is a 145-amino-acid chain: D-aminoacyl-tRNA deacylase (145 aa).

The short motif at 137 to 138 is the Gly-cisPro motif, important for rejection of L-amino acids element; the sequence is GP.

The protein belongs to the DTD family. Homodimer.

The protein resides in the cytoplasm. The enzyme catalyses glycyl-tRNA(Ala) + H2O = tRNA(Ala) + glycine + H(+). The catalysed reaction is a D-aminoacyl-tRNA + H2O = a tRNA + a D-alpha-amino acid + H(+). In terms of biological role, an aminoacyl-tRNA editing enzyme that deacylates mischarged D-aminoacyl-tRNAs. Also deacylates mischarged glycyl-tRNA(Ala), protecting cells against glycine mischarging by AlaRS. Acts via tRNA-based rather than protein-based catalysis; rejects L-amino acids rather than detecting D-amino acids in the active site. By recycling D-aminoacyl-tRNA to D-amino acids and free tRNA molecules, this enzyme counteracts the toxicity associated with the formation of D-aminoacyl-tRNA entities in vivo and helps enforce protein L-homochirality. The polypeptide is D-aminoacyl-tRNA deacylase (Photorhabdus laumondii subsp. laumondii (strain DSM 15139 / CIP 105565 / TT01) (Photorhabdus luminescens subsp. laumondii)).